We begin with the raw amino-acid sequence, 65 residues long: Metallothionein-like protein type 3 (65 aa).

It belongs to the metallothionein superfamily. Type 15 family.

In terms of biological role, metallothioneins have a high content of cysteine residues that bind various heavy metals. This chain is Metallothionein-like protein type 3, found in Musa acuminata (Banana).